The sequence spans 262 residues: 3-methyl-2-oxobutanoate hydroxymethyltransferase (262 aa).

The Mg(2+) site is built by D42 and D81. Residues 42 to 43, D81, and K110 each bind 3-methyl-2-oxobutanoate; that span reads DS. E112 provides a ligand contact to Mg(2+). The active-site Proton acceptor is E179.

Belongs to the PanB family. In terms of assembly, homodecamer; pentamer of dimers. The cofactor is Mg(2+).

It localises to the cytoplasm. The enzyme catalyses 3-methyl-2-oxobutanoate + (6R)-5,10-methylene-5,6,7,8-tetrahydrofolate + H2O = 2-dehydropantoate + (6S)-5,6,7,8-tetrahydrofolate. The protein operates within cofactor biosynthesis; (R)-pantothenate biosynthesis; (R)-pantoate from 3-methyl-2-oxobutanoate: step 1/2. Its function is as follows. Catalyzes the reversible reaction in which hydroxymethyl group from 5,10-methylenetetrahydrofolate is transferred onto alpha-ketoisovalerate to form ketopantoate. In Methylobacillus flagellatus (strain ATCC 51484 / DSM 6875 / VKM B-1610 / KT), this protein is 3-methyl-2-oxobutanoate hydroxymethyltransferase.